The sequence spans 181 residues: Ribosome maturation factor RimM (181 aa).

The PRC barrel domain occupies 98-177 (EGEFFYCDLV…KITTHNAKTL (80 aa)).

It belongs to the RimM family. In terms of assembly, binds ribosomal protein uS19.

It is found in the cytoplasm. An accessory protein needed during the final step in the assembly of 30S ribosomal subunit, possibly for assembly of the head region. Essential for efficient processing of 16S rRNA. May be needed both before and after RbfA during the maturation of 16S rRNA. It has affinity for free ribosomal 30S subunits but not for 70S ribosomes. This Helicobacter pylori (strain HPAG1) protein is Ribosome maturation factor RimM.